The primary structure comprises 181 residues: Protein Syd (181 aa).

This sequence belongs to the Syd family.

The protein localises to the cell inner membrane. Functionally, interacts with the SecY protein in vivo. May bind preferentially to an uncomplexed state of SecY, thus functioning either as a chelating agent for excess SecY in the cell or as a regulatory factor that negatively controls the translocase function. This is Protein Syd from Escherichia coli O81 (strain ED1a).